A 453-amino-acid chain; its full sequence is MKLKTTLFGNVYQFKDVKEVLAKANELRSGDVLAGVAAASSQERVAAKQVLSEMTVADIRNNPVIAYEEDCVTRLIQDDVNETAYNRIKNWSISELREYVLSDETSVDDIAFTRKGLTSEVVAAVAKICSNADLIYGGKKMPVIKKANTTIGIPGTFSCRLQPNDTRDDVQSIAAQIYEGLSFGAGDAVIGVNPVTDDVENLTRVLDTVYGVIDKFNIPTQGCVLAHVTTQIEAIRRGAPGGLIFQSICGSEKGLKEFGVELAMLDEARAVGAEFNRIAGENCLYFETGQGSALSAGANFGADQVTMEARNYGLARHYDPFLVNTVVGFIGPEYLYNDRQIIRAGLEDHFMGKLSGISMGCDCCYTNHADADQNLNENLMILLATAGCNYIMGMPLGDDIMLNYQTTAFHDTATVRQLLNLRPSPEFERWLETMGIMANGRLTKRAGDPSLFF.

Residues 160–162 and N193 contribute to the substrate site; that span reads RLQ. Adenosylcob(III)alamin contacts are provided by P194 and Q246. E287 provides a ligand contact to substrate. S295 contacts adenosylcob(III)alamin. Position 362 (D362) interacts with substrate. M401 provides a ligand contact to adenosylcob(III)alamin.

The protein belongs to the EutB family. The basic unit is a heterodimer which dimerizes to form tetramers. The heterotetramers trimerize; 6 large subunits form a core ring with 6 small subunits projecting outwards. Adenosylcob(III)alamin serves as cofactor.

It is found in the bacterial microcompartment. It carries out the reaction ethanolamine = acetaldehyde + NH4(+). It functions in the pathway amine and polyamine degradation; ethanolamine degradation. In terms of biological role, catalyzes the deamination of various vicinal amino-alcohols to oxo compounds. It is spontaneously inactivated by its substrate and reactivated by EutA. May play a role in BMC assembly or maintenance. Its function is as follows. Expression of the eut operon allows this bacteria to use ethanolamine (EA) as a carbon, nitrogen and energy source. It relies on cobalamin (vitamin B12) both as a cofactor for the ethanolamine ammonia-lyase activity and to induce the operon. EA enhances bacterial survival in macrophages in a concentration-dependent manner, suggesting it is an important nutrient during infection. The sequence is that of Ethanolamine ammonia-lyase large subunit from Salmonella typhimurium (strain LT2 / SGSC1412 / ATCC 700720).